The chain runs to 323 residues: MIRVLLANPRGFCAGVDRAIEIVERALAMYGAPIYVRHEVVHNRFVVEDLEKKGAVFVENLEEVPEGSMLIFSAHGVSHEVRREAAARKLQIFDATCPLVTKVHVEVAKMDKEGKEIVMIGHQGHPEVEGTMGQIAKSKGTMYLVETAEDVARLQVKNESNLAYVTQTTLSVDDAARVIEALKQRFPKIIGPKKDDICYATQNRQDAVKKLVKLCDLVVVVGSPNSSNSNRLCEVARNENVEAYMVDQAEQLQESWLTNKRCIGITAGASAPEILVQQVLERLEQIAAKQSNQGVIIEELSGVLESVTFPLPKAEPVSFNKYI.

Cys-13 contributes to the [4Fe-4S] cluster binding site. (2E)-4-hydroxy-3-methylbut-2-enyl diphosphate contacts are provided by His-42 and His-75. His-42 and His-75 together coordinate dimethylallyl diphosphate. Residues His-42 and His-75 each coordinate isopentenyl diphosphate. Cys-97 contacts [4Fe-4S] cluster. A (2E)-4-hydroxy-3-methylbut-2-enyl diphosphate-binding site is contributed by His-125. His-125 contacts dimethylallyl diphosphate. His-125 lines the isopentenyl diphosphate pocket. Glu-127 (proton donor) is an active-site residue. Thr-168 provides a ligand contact to (2E)-4-hydroxy-3-methylbut-2-enyl diphosphate. Cys-198 contributes to the [4Fe-4S] cluster binding site. Residues Ser-226, Ser-227, Asn-228, and Ser-270 each contribute to the (2E)-4-hydroxy-3-methylbut-2-enyl diphosphate site. Dimethylallyl diphosphate-binding residues include Ser-226, Ser-227, Asn-228, and Ser-270. Isopentenyl diphosphate contacts are provided by Ser-226, Ser-227, Asn-228, and Ser-270.

This sequence belongs to the IspH family. [4Fe-4S] cluster serves as cofactor.

The enzyme catalyses isopentenyl diphosphate + 2 oxidized [2Fe-2S]-[ferredoxin] + H2O = (2E)-4-hydroxy-3-methylbut-2-enyl diphosphate + 2 reduced [2Fe-2S]-[ferredoxin] + 2 H(+). It catalyses the reaction dimethylallyl diphosphate + 2 oxidized [2Fe-2S]-[ferredoxin] + H2O = (2E)-4-hydroxy-3-methylbut-2-enyl diphosphate + 2 reduced [2Fe-2S]-[ferredoxin] + 2 H(+). It participates in isoprenoid biosynthesis; dimethylallyl diphosphate biosynthesis; dimethylallyl diphosphate from (2E)-4-hydroxy-3-methylbutenyl diphosphate: step 1/1. Its pathway is isoprenoid biosynthesis; isopentenyl diphosphate biosynthesis via DXP pathway; isopentenyl diphosphate from 1-deoxy-D-xylulose 5-phosphate: step 6/6. In terms of biological role, catalyzes the conversion of 1-hydroxy-2-methyl-2-(E)-butenyl 4-diphosphate (HMBPP) into a mixture of isopentenyl diphosphate (IPP) and dimethylallyl diphosphate (DMAPP). Acts in the terminal step of the DOXP/MEP pathway for isoprenoid precursor biosynthesis. In Nitrosomonas europaea (strain ATCC 19718 / CIP 103999 / KCTC 2705 / NBRC 14298), this protein is 4-hydroxy-3-methylbut-2-enyl diphosphate reductase.